The chain runs to 292 residues: Shikimate dehydrogenase (NADP(+)) (292 aa).

Residues 22–24 (SLS) and serine 69 each bind shikimate. Residue lysine 73 is the Proton acceptor of the active site. Shikimate is bound by residues asparagine 94 and aspartate 111. NADP(+)-binding positions include 135–139 (GVGGA) and isoleucine 236. Shikimate is bound at residue tyrosine 238. Glycine 260 serves as a coordination point for NADP(+).

Belongs to the shikimate dehydrogenase family. As to quaternary structure, homodimer.

It carries out the reaction shikimate + NADP(+) = 3-dehydroshikimate + NADPH + H(+). It functions in the pathway metabolic intermediate biosynthesis; chorismate biosynthesis; chorismate from D-erythrose 4-phosphate and phosphoenolpyruvate: step 4/7. Involved in the biosynthesis of the chorismate, which leads to the biosynthesis of aromatic amino acids. Catalyzes the reversible NADPH linked reduction of 3-dehydroshikimate (DHSA) to yield shikimate (SA). The polypeptide is Shikimate dehydrogenase (NADP(+)) (Streptococcus pyogenes serotype M18 (strain MGAS8232)).